A 296-amino-acid chain; its full sequence is MNLENLTTERRNENTMGLDEMSVKEALQKMNQEDQKVAMAVGQELAAIEPVVEAIIKSFNQGGRLIYMGAGTSGRLGVLDAAECVPTFGVEPEMVQGLIAGGQKAMTVAVEGAEDSKELGRQDLVDLKLSANDIVVGIAASGRTPYVIGGLEYATTVGAATATVACNKNAEISKYAQMPIEVDAGPEFLTGSTRLKSGTAQKLILNMLSTISMIGIGKVYNNLMVDVKPTNEKLVERSKRIIMEATGCSYEVAELKFVEAEENVKLAIVMILTDSTKEEATQKLIDGNQFIKNTLN.

One can recognise an SIS domain in the interval 55-218; it reads IIKSFNQGGR…STISMIGIGK (164 aa). Glutamate 83 functions as the Proton donor in the catalytic mechanism. Glutamate 114 is a catalytic residue.

The protein belongs to the GCKR-like family. MurNAc-6-P etherase subfamily. In terms of assembly, homodimer.

It catalyses the reaction N-acetyl-D-muramate 6-phosphate + H2O = N-acetyl-D-glucosamine 6-phosphate + (R)-lactate. The protein operates within amino-sugar metabolism; N-acetylmuramate degradation. Its function is as follows. Specifically catalyzes the cleavage of the D-lactyl ether substituent of MurNAc 6-phosphate, producing GlcNAc 6-phosphate and D-lactate. In Enterococcus faecalis (strain ATCC 700802 / V583), this protein is N-acetylmuramic acid 6-phosphate etherase 2.